Here is a 364-residue protein sequence, read N- to C-terminus: tRNA N6-adenosine threonylcarbamoyltransferase (364 aa).

Residues His115 and His119 each coordinate Fe cation. Substrate contacts are provided by residues 137 to 141 (LVSGG), Asp170, Gly183, and Asn288. Residue Asp316 coordinates Fe cation.

The protein belongs to the KAE1 / TsaD family. It depends on Fe(2+) as a cofactor.

The protein localises to the cytoplasm. The catalysed reaction is L-threonylcarbamoyladenylate + adenosine(37) in tRNA = N(6)-L-threonylcarbamoyladenosine(37) in tRNA + AMP + H(+). Functionally, required for the formation of a threonylcarbamoyl group on adenosine at position 37 (t(6)A37) in tRNAs that read codons beginning with adenine. Is involved in the transfer of the threonylcarbamoyl moiety of threonylcarbamoyl-AMP (TC-AMP) to the N6 group of A37, together with TsaE and TsaB. TsaD likely plays a direct catalytic role in this reaction. This Bartonella bacilliformis (strain ATCC 35685 / KC583 / Herrer 020/F12,63) protein is tRNA N6-adenosine threonylcarbamoyltransferase.